Here is a 148-residue protein sequence, read N- to C-terminus: 6,7-dimethyl-8-ribityllumazine synthase (148 aa).

5-amino-6-(D-ribitylamino)uracil contacts are provided by residues Phe13, 44-46, and 73-75; these read ALE and MVI. 78–79 provides a ligand contact to (2S)-2-hydroxy-3-oxobutyl phosphate; that stretch reads ET. The Proton donor role is filled by His81. Asn106 contacts 5-amino-6-(D-ribitylamino)uracil. Arg120 is a (2S)-2-hydroxy-3-oxobutyl phosphate binding site.

The protein belongs to the DMRL synthase family.

The catalysed reaction is (2S)-2-hydroxy-3-oxobutyl phosphate + 5-amino-6-(D-ribitylamino)uracil = 6,7-dimethyl-8-(1-D-ribityl)lumazine + phosphate + 2 H2O + H(+). Its pathway is cofactor biosynthesis; riboflavin biosynthesis; riboflavin from 2-hydroxy-3-oxobutyl phosphate and 5-amino-6-(D-ribitylamino)uracil: step 1/2. Functionally, catalyzes the formation of 6,7-dimethyl-8-ribityllumazine by condensation of 5-amino-6-(D-ribitylamino)uracil with 3,4-dihydroxy-2-butanone 4-phosphate. This is the penultimate step in the biosynthesis of riboflavin. This chain is 6,7-dimethyl-8-ribityllumazine synthase, found in Agrobacterium fabrum (strain C58 / ATCC 33970) (Agrobacterium tumefaciens (strain C58)).